We begin with the raw amino-acid sequence, 1092 residues long: Neural cell adhesion molecule 1-B (1092 aa).

Residues Met-1–Ala-19 form the signal peptide. 5 Ig-like C2-type domains span residues Leu-20 to Asn-108, Gln-113 to Gln-202, Pro-208 to Val-295, Pro-303 to Gln-397, and Pro-400 to Val-489. Topologically, residues Leu-20 to Thr-705 are extracellular. 2 cysteine pairs are disulfide-bonded: Cys-41–Cys-93 and Cys-136–Cys-186. Asn-82 carries an N-linked (GlcNAc...) asparagine glycan. Heparin is bound by residues Arg-149 to Lys-153 and Lys-158 to Arg-162. Asn-219 carries N-linked (GlcNAc...) asparagine glycosylation. A disulfide bridge connects residues Cys-232 and Cys-282. Asn-310, Asn-341, Asn-417, Asn-443, and Asn-472 each carry an N-linked (GlcNAc...) asparagine glycan. Cys-323 and Cys-379 form a disulfide bridge. A disulfide bridge links Cys-420 with Cys-473. Fibronectin type-III domains follow at residues Thr-493–Val-592 and Glu-595–Pro-691. The helical transmembrane segment at Gly-706–Val-723 threads the bilayer. Over Asp-724–Ala-1092 the chain is Cytoplasmic. A compositionally biased stretch (basic and acidic residues) spans Lys-754 to Asn-784. Disordered regions lie at residues Lys-754 to Phe-1005 and Thr-1024 to Ala-1092. 2 stretches are compositionally biased toward low complexity: residues Thr-820–Thr-832 and Ser-839–Thr-851. Residues Asp-860–Pro-871 show a composition bias toward polar residues. Positions Pro-917–Ala-929 are enriched in low complexity. Over residues Ala-968 to Glu-978 the composition is skewed to polar residues. Residues Ala-1050–Val-1068 are compositionally biased toward basic and acidic residues. Residues Asn-1080–Ala-1092 show a composition bias toward polar residues.

Post-translationally, polysialylated by ST8SIA2 and ST8SIA4. Polysialylation modulates cell interactions by confering both attractive and repulsive properties that are highly regulated by ST8SIA2 and ST8SIA4. Polysialylation is formed on a-2,3-linked sialic acid of core glycans.

It is found in the cell membrane. Functionally, this protein is a cell adhesion molecule involved in neuron-neuron adhesion, neurite fasciculation, outgrowth of neurites, etc. This Xenopus laevis (African clawed frog) protein is Neural cell adhesion molecule 1-B.